The following is a 432-amino-acid chain: Tol-Pal system protein TolB (432 aa).

Residues 1–21 (MKHVRIFATLLALLVISVTPA) form the signal peptide.

This sequence belongs to the TolB family. As to quaternary structure, the Tol-Pal system is composed of five core proteins: the inner membrane proteins TolA, TolQ and TolR, the periplasmic protein TolB and the outer membrane protein Pal. They form a network linking the inner and outer membranes and the peptidoglycan layer.

It localises to the periplasm. In terms of biological role, part of the Tol-Pal system, which plays a role in outer membrane invagination during cell division and is important for maintaining outer membrane integrity. This Geobacter sulfurreducens (strain ATCC 51573 / DSM 12127 / PCA) protein is Tol-Pal system protein TolB.